The primary structure comprises 914 residues: Chlorate reductase subunit alpha (914 aa).

The tat-type signal signal peptide spans 1–32 (MNSPDEHNGRRRFLQFSAAALASAAASPSLWA). The 4Fe-4S Mo/W bis-MGD-type domain occupies 62-125 (DSVGVMTHSN…VYCSWSKQPD (64 aa)). Residues H69, C73, C77, and C111 each coordinate [4Fe-4S] cluster. Mo-bis(molybdopterin guanine dinucleotide) is bound at residue D205.

This sequence belongs to the prokaryotic molybdopterin-containing oxidoreductase family. As to quaternary structure, heterotrimer of alpha, beta and gamma subunits. The cofactor is [4Fe-4S] cluster. It depends on Mo-bis(molybdopterin guanine dinucleotide) as a cofactor. Predicted to be exported by the Tat system. The position of the signal peptide cleavage has not been experimentally proven.

The protein localises to the periplasm. The enzyme catalyses chlorate + AH2 = chlorite + A + H2O. Terminal reductase that allows anaerobic growth on chlorate as the sole respiratory oxidant. The chain is Chlorate reductase subunit alpha (clrA) from Ideonella dechloratans.